We begin with the raw amino-acid sequence, 312 residues long: Methionyl-tRNA formyltransferase (312 aa).

Residue 113 to 116 (SLLP) participates in (6S)-5,6,7,8-tetrahydrofolate binding.

This sequence belongs to the Fmt family.

It carries out the reaction L-methionyl-tRNA(fMet) + (6R)-10-formyltetrahydrofolate = N-formyl-L-methionyl-tRNA(fMet) + (6S)-5,6,7,8-tetrahydrofolate + H(+). Attaches a formyl group to the free amino group of methionyl-tRNA(fMet). The formyl group appears to play a dual role in the initiator identity of N-formylmethionyl-tRNA by promoting its recognition by IF2 and preventing the misappropriation of this tRNA by the elongation apparatus. The chain is Methionyl-tRNA formyltransferase from Francisella philomiragia subsp. philomiragia (strain ATCC 25017 / CCUG 19701 / FSC 153 / O#319-036).